The sequence spans 934 residues: Palmitoyltransferase ZDHHC8 (934 aa).

Residues 1-9 (MPKCDVKTR) are Cytoplasmic-facing. The helical transmembrane segment at 10 to 30 (YIPATFAWIVLLLTTFLFFFY) threads the bilayer. Over 31 to 47 (PCQFYVKSHPWVLAYQG) the chain is Extracellular. Residues 48 to 68 (VITFFVLANFTLATFMDPGII) traverse the membrane as a helical segment. At 69 to 142 (PKASPDEDCE…NNCIGRRNYR (74 aa)) the chain is on the cytoplasmic side. A DHHC domain is found at 99–149 (KWCVTCKFYRPPRCSHCSVCNHCIETFDHHCPWVNNCIGRRNYRFFFFFLV). Cys-129 functions as the S-palmitoyl cysteine intermediate in the catalytic mechanism. The chain crosses the membrane as a helical span at residues 143-163 (FFFFFLVSLSIHMLSIFSLCL). Residues 164 to 177 (VYVLKIMPNIKDTA) lie on the Extracellular side of the membrane. The chain crosses the membrane as a helical span at residues 178–198 (PIVAIILMGLVTILAIPIFGL). The Cytoplasmic portion of the chain corresponds to 199–934 (TGFHMVLVSR…IYDMNYEISV (736 aa)). Disordered regions lie at residues 336–440 (NGYN…GYTS), 506–525 (MASP…RRPD), 669–705 (QRGV…SGIG), 751–780 (QQQQ…TMPQ), 835–862 (PNPM…TPTR), and 881–934 (LEQQ…EISV). Composition is skewed to polar residues over residues 337–349 (GYNQ…TLYS) and 381–394 (RHNS…QVSD). The segment covering 397–411 (GLNGSVSTGGGGGGD) has biased composition (gly residues). The span at 415–429 (HMRLYHPRHSPHARP) shows a compositional bias: basic residues. Low complexity-rich tracts occupy residues 688–705 (QQQQ…SGIG) and 751–765 (QQQQ…AAAA). Over residues 768-780 (HRSNPTSPTTMPQ) the composition is skewed to polar residues. Positions 910–919 (MQSNASNSGT) are enriched in polar residues.

It belongs to the DHHC palmitoyltransferase family. ERF2/ZDHHC9 subfamily.

The protein localises to the golgi apparatus membrane. The protein resides in the cell membrane. The catalysed reaction is L-cysteinyl-[protein] + hexadecanoyl-CoA = S-hexadecanoyl-L-cysteinyl-[protein] + CoA. Functionally, palmitoyltransferase that catalyzes the addition of palmitate onto various protein substrates and therefore functions in several unrelated biological processes. Regulates tissue growth possibly by regulating Ras64B protein stability. May regulate CG34450 mRNA levels. The protein is Palmitoyltransferase ZDHHC8 of Drosophila melanogaster (Fruit fly).